The following is a 169-amino-acid chain: ATP synthase subunit b, sodium ion specific (169 aa).

Residues 5-27 (SFISLDWGVVFQIVNTIVMYLIL) form a helical membrane-spanning segment.

Belongs to the ATPase B chain family. As to quaternary structure, F-type ATPases have 2 components, F(1) - the catalytic core - and F(0) - the membrane proton channel. F(1) has five subunits: alpha(3), beta(3), gamma(1), delta(1), epsilon(1). F(0) has three main subunits: a(1), b(2) and c(10-14). The alpha and beta chains form an alternating ring which encloses part of the gamma chain. F(1) is attached to F(0) by a central stalk formed by the gamma and epsilon chains, while a peripheral stalk is formed by the delta and b chains.

It localises to the cell membrane. Its function is as follows. F(1)F(0) ATP synthase produces ATP from ADP in the presence of a proton or sodium gradient. F-type ATPases consist of two structural domains, F(1) containing the extramembraneous catalytic core and F(0) containing the membrane proton channel, linked together by a central stalk and a peripheral stalk. During catalysis, ATP synthesis in the catalytic domain of F(1) is coupled via a rotary mechanism of the central stalk subunits to proton translocation. Component of the F(0) channel, it forms part of the peripheral stalk, linking F(1) to F(0). In terms of biological role, in this organism this enzyme may function as an ATP-driven Na(+) ion pump to generate a Na(+) ion electrochemical gradient rather than as an ATP synthase. The protein is ATP synthase subunit b, sodium ion specific (atpF) of Clostridium paradoxum.